The primary structure comprises 342 residues: MATH domain and coiled-coil domain-containing protein At3g44800 (342 aa).

Residues 3–129 form the MATH domain; sequence YEKFTWVIKN…NNEVKIVAEV (127 aa). Positions 253 to 327 form a coiled coil; that stretch reads KVDWLERKLE…ALLEKEKGKV (75 aa).

This Arabidopsis thaliana (Mouse-ear cress) protein is MATH domain and coiled-coil domain-containing protein At3g44800.